The following is a 433-amino-acid chain: Histidinol dehydrogenase 2 (433 aa).

NAD(+) is bound by residues tyrosine 130, glutamine 192, and asparagine 215. Positions 238, 260, and 263 each coordinate substrate. Zn(2+)-binding residues include glutamine 260 and histidine 263. Catalysis depends on proton acceptor residues glutamate 328 and histidine 329. Positions 329, 362, 416, and 421 each coordinate substrate. A Zn(2+)-binding site is contributed by aspartate 362. Histidine 421 is a binding site for Zn(2+).

The protein belongs to the histidinol dehydrogenase family. Requires Zn(2+) as cofactor.

It carries out the reaction L-histidinol + 2 NAD(+) + H2O = L-histidine + 2 NADH + 3 H(+). It participates in amino-acid biosynthesis; L-histidine biosynthesis; L-histidine from 5-phospho-alpha-D-ribose 1-diphosphate: step 9/9. Functionally, catalyzes the sequential NAD-dependent oxidations of L-histidinol to L-histidinaldehyde and then to L-histidine. The polypeptide is Histidinol dehydrogenase 2 (hisD2) (Nostoc sp. (strain PCC 7120 / SAG 25.82 / UTEX 2576)).